The chain runs to 183 residues: Ribosome maturation factor RimM (183 aa).

Positions 104–183 constitute a PRC barrel domain; that stretch reads EGDYYWKDLM…TIEVDWDPGF (80 aa).

The protein belongs to the RimM family. Binds ribosomal protein uS19.

It is found in the cytoplasm. Its function is as follows. An accessory protein needed during the final step in the assembly of 30S ribosomal subunit, possibly for assembly of the head region. Essential for efficient processing of 16S rRNA. May be needed both before and after RbfA during the maturation of 16S rRNA. It has affinity for free ribosomal 30S subunits but not for 70S ribosomes. This chain is Ribosome maturation factor RimM, found in Salmonella arizonae (strain ATCC BAA-731 / CDC346-86 / RSK2980).